A 132-amino-acid chain; its full sequence is Large ribosomal subunit protein bL12 (132 aa).

The protein belongs to the bacterial ribosomal protein bL12 family. As to quaternary structure, homodimer. Part of the ribosomal stalk of the 50S ribosomal subunit. Forms a multimeric L10(L12)X complex, where L10 forms an elongated spine to which 2 to 4 L12 dimers bind in a sequential fashion. Binds GTP-bound translation factors.

Forms part of the ribosomal stalk which helps the ribosome interact with GTP-bound translation factors. Is thus essential for accurate translation. The sequence is that of Large ribosomal subunit protein bL12 from Ehrlichia canis (strain Jake).